Here is a 224-residue protein sequence, read N- to C-terminus: MRLAKPKAGISRSSSQGKAYENKRKTGRQRQKWGMTIRFDSSFSRLRRSLDDKPYKCTECEKSFSQSSTLFQHQKIHTGKKSHKCADCGKSFFQSSNLIQHRRIHTGEKPYKCDECGESFKQSSNLIQHQRIHTGEKPYQCDECGRCFSQSSHLIQHQRTHTGEKPYQCSECGKCFSQSSHLRQHMKVHKEEKPRKTRGKNIRVKTHLPSWKAGTGRKSVAGLR.

Residues 1–34 (MRLAKPKAGISRSSSQGKAYENKRKTGRQRQKWG) are disordered. N6-acetyllysine occurs at positions 18 and 23. Ser-49 carries the phosphoserine modification. C2H2-type zinc fingers lie at residues 55–77 (YKCT…QKIH), 83–105 (HKCA…RRIH), 111–133 (YKCD…QRIH), 139–161 (YQCD…QRTH), and 167–189 (YQCS…MKVH).

This sequence belongs to the krueppel C2H2-type zinc-finger protein family. In the embryo, expressed in developing craniofacial structures including dental epithelium of maxillary molar tooth organs, tongue epithelium and muscle, and craniofacial bone osteoblasts. In the adult, expressed in mesoderm-derived tissues such as skeletal muscle, heart, kidney and liver. Intermediate expression in spleen, thymus and brain. Low levels in endoderm-derived tissues such as intestine and colon.

The protein resides in the nucleus. Functionally, binds DNA through the consensus sequence 5'-CAATG-3'. May be involved in transcriptional regulation and may play a role in tooth formation. In Homo sapiens (Human), this protein is Zinc finger protein 22 (ZNF22).